Here is a 446-residue protein sequence, read N- to C-terminus: Probable D-serine dehydratase (446 aa).

At lysine 116 the chain carries N6-(pyridoxal phosphate)lysine.

Belongs to the serine/threonine dehydratase family. DsdA subfamily. Pyridoxal 5'-phosphate is required as a cofactor.

It catalyses the reaction D-serine = pyruvate + NH4(+). The polypeptide is Probable D-serine dehydratase (Bacillus thuringiensis (strain Al Hakam)).